Here is a 152-residue protein sequence, read N- to C-terminus: MALIIPEKFQHILRVMNTNIDGKRKIMFAMTAIKGMGRRYANVVCKKADVDITKRAGELSEDEIERVITIMSNPRQYKIPNWFLNRQKDVKDGKYSQVMSNALDNKLREDLERLKKIRAHRGLRHYWGLRVRGQHTKTTGRRGRTVGVAKKK.

This sequence belongs to the universal ribosomal protein uS13 family.

It is found in the cytoplasm. Its function is as follows. Located at the top of the head of the 40S subunit, it contacts several helices of the 18S rRNA. In Argopecten irradians (Bay scallop), this protein is Small ribosomal subunit protein uS13 (RPS18).